The sequence spans 950 residues: Leucine--tRNA ligase (950 aa).

The 'HIGH' region signature appears at 41–52 (PYPSGDGLHVGH). The 'KMSKS' region motif lies at 718–722 (KMSKS). K721 is an ATP binding site.

The protein belongs to the class-I aminoacyl-tRNA synthetase family.

It localises to the cytoplasm. The catalysed reaction is tRNA(Leu) + L-leucine + ATP = L-leucyl-tRNA(Leu) + AMP + diphosphate. The chain is Leucine--tRNA ligase from Rhodopirellula baltica (strain DSM 10527 / NCIMB 13988 / SH1).